The chain runs to 293 residues: Insulin-like growth factor-binding protein 3 (293 aa).

Residues 1–27 (MQRARPALWAAALIALALLRGPPAARA) form the signal peptide. Residues 36–119 (PVVRCEPCDA…LDGRGICANA (84 aa)) form the IGFBP N-terminal domain. Cystine bridges form between C40/C69, C43/C71, C51/C72, C60/C75, C83/C96, and C90/C116. 2 N-linked (GlcNAc...) asparagine glycosylation sites follow: N118 and N138. 2 disordered regions span residues 132 to 166 (APPAPGNGSESEEDRSVDSMENQALPSTHRVPDSK) and 178 to 213 (KKGHAKDSQRYKVDYESQSTDTQNFSSESKRETEYG). The residue at position 150 (S150) is a Phosphoserine. Residues 178 to 192 (KKGHAKDSQRYKVDY) are compositionally biased toward basic and acidic residues. A compositionally biased stretch (polar residues) spans 193–204 (ESQSTDTQNFSS). N201 is a glycosylation site (N-linked (GlcNAc...) asparagine). S203 bears the Phosphoserine mark. The Thyroglobulin type-1 domain occupies 212 to 287 (YGPCRREMED…DVKGKGDVHC (76 aa)). Cystine bridges form between C215–C242, C253–C264, and C266–C287.

In terms of assembly, interacts with XLKD1. Binds IGF2 more than IGF1. Forms a ternary complex of about 140 to 150 kDa with IGF1 or IGF2 and a 85 kDa glycoprotein (ALS). Interacts with humanin; humanin competes with importin KPNB1 for binding to IGFBP3, blocking IGFBP3 nuclear import and IGFBP3-mediated apoptosis. Interacts with TMEM219. Interacts with RXRA; this interaction modulates the transcriptional activity of RXRA. Interacts with LRP1; this interaction mediates cell growth inhibition independent of IGF1. In terms of processing, phosphorylated by FAM20C in the extracellular medium. Phosphorylated by CK2; resulting in decreased nuclear localization.

It localises to the secreted. It is found in the nucleus. Its function is as follows. Multifunctional protein that plays a critical role in regulating the availability of IGFs such as IGF1 and IGF2 to their receptors and thereby regulates IGF-mediated cellular processes including proliferation, differentiation, and apoptosis in a cell-type specific manner. Also exhibits IGF-independent antiproliferative and apoptotic effects mediated by its receptor TMEM219/IGFBP-3R. Inhibits the positive effect of humanin on insulin sensitivity. Promotes testicular germ cell apoptosis. Acts via LRP-1/alpha2M receptor, also known as TGF-beta type V receptor, to mediate cell growth inhibition independent of IGF1. Mechanistically, induces serine-specific dephosphorylation of IRS1 or IRS2 upon ligation to its receptor, leading to the inhibitory cascade. In the nucleus, interacts with transcription factors such as retinoid X receptor-alpha/RXRA to regulate transcriptional signaling and apoptosis. The polypeptide is Insulin-like growth factor-binding protein 3 (IGFBP3) (Sus scrofa (Pig)).